The primary structure comprises 1117 residues: Cytospin-A (1117 aa).

3 disordered regions span residues 1–176 (MKKA…NQIS), 293–323 (SLSP…GSVE), and 358–390 (SSDD…NASE). The segment covering 45–90 (TAASLSKTKSSDDLLAGMAGGVTVTNGVKGKKSTCPSAAPSASAPA) has biased composition (low complexity). Residues 93–117 (TVENKSKISTGTASSTKRNTSTGNK) show a composition bias toward polar residues. Basic and acidic residues-rich tracts occupy residues 120 to 131 (SSTRERLRERTR) and 158 to 171 (TATE…KSKS). Residues 168-280 (KSKSDNQISD…LNALGFSLEQ (113 aa)) are a coiled coil. Over residues 293-303 (SLSPEITPGNQ) the composition is skewed to polar residues. A compositionally biased stretch (low complexity) spans 358–377 (SSDDALDAPSSSESEGIPSI). Residues serine 384, serine 385, and serine 389 each carry the phosphoserine modification. Coiled coils occupy residues 394 to 449 (ACLT…MESL) and 487 to 807 (RYME…RGRV). Phosphoserine occurs at positions 868, 881, and 887. The segment at 919-1001 (RTSSASRPAS…SRIREERKDP (83 aa)) is disordered. Positions 946-956 (RSSEEMKRDIS) are enriched in basic and acidic residues. Low complexity predominate over residues 971 to 990 (TTSPQLSLSSSPTASVTPTT). The region spanning 1011–1116 (GSKRNALLKW…YVTAIYKYFE (106 aa)) is the Calponin-homology (CH) domain.

This sequence belongs to the cytospin-A family. May interact with both microtubules and actin cytoskeleton.

It localises to the cytoplasm. It is found in the cytoskeleton. Its subcellular location is the spindle. The protein resides in the cell junction. The protein localises to the gap junction. Functionally, involved in cytokinesis and spindle organization. May play a role in actin cytoskeleton organization and microtubule stabilization and hence required for proper cell adhesion and migration. The sequence is that of Cytospin-A (SPECC1L) from Pan troglodytes (Chimpanzee).